We begin with the raw amino-acid sequence, 312 residues long: Malate dehydrogenase (312 aa).

NAD(+)-binding positions include 7–13 (GAAGGIG) and Asp34. Substrate is bound by residues Arg81 and Arg87. NAD(+) is bound by residues Asn94 and 117–119 (ITN). The substrate site is built by Asn119 and Arg153. The active-site Proton acceptor is His177. Met227 provides a ligand contact to NAD(+).

This sequence belongs to the LDH/MDH superfamily. MDH type 1 family. Homodimer.

It carries out the reaction (S)-malate + NAD(+) = oxaloacetate + NADH + H(+). In terms of biological role, catalyzes the reversible oxidation of malate to oxaloacetate. In Photobacterium profundum (strain SS9), this protein is Malate dehydrogenase.